We begin with the raw amino-acid sequence, 506 residues long: Zinc finger and SCAN domain containing protein 4F (506 aa).

The interval 1–24 (MASQQAPAKDLQTNNLEFTPTDSS) is disordered. The SCAN box domain maps to 37–119 (SAQLNFSPSN…RFMESLTDEC (83 aa)). 4 C2H2-type zinc fingers span residues 395 to 417 (YKCEECSRMFKHARSLSSHQRTH), 424 to 446 (LLCVTCQKMFKRVSDRRTHEIIH), 452 to 474 (FKCSTCEKSFSHKTNLKSHEMIH), and 480 to 503 (YVCSLCSRRFRQSSTYHRHLRNYH).

In terms of tissue distribution, up-regulated in blastocyst outgrowths and is detectable in a mosaic fashion in ES cultures.

It is found in the nucleus. The protein resides in the chromosome. Its subcellular location is the telomere. Functionally, transcription factor required to regulate early development. Binds telomeres and plays a key role in genomic stability by regulating telomere elongation. Acts as an activator of spontaneous telomere sister chromatid exchange (T-SCE) and telomere elongation. The polypeptide is Zinc finger and SCAN domain containing protein 4F (Zscan4f) (Mus musculus (Mouse)).